The chain runs to 700 residues: Leucine zipper putative tumor suppressor 3 (700 aa).

Disordered stretches follow at residues 1-20, 40-121, 133-188, and 202-344; these read MAPADLASEGPKLEDPPAPH, RADP…SEDK, LRGS…SEPL, and FHSM…PPSP. Basic and acidic residues predominate over residues 109 to 121; sequence NRERPGRYPSEDK. The segment covering 203-216 has biased composition (polar residues); the sequence is HSMQNLCPPQTNGT. Low complexity-rich tracts occupy residues 248–265 and 301–321; these read DSGRNSLTSLPTYSSSYS and GTSDSGRASSKSGSSSSMGRS. Residues 322–333 are compositionally biased toward gly residues; the sequence is GHLGSGEGGNGG. 2 positions are modified to phosphoserine: serine 343 and serine 345. 2 coiled-coil regions span residues 345–523 and 597–666; these read SALI…SLRD and TRAL…RLRE. The disordered stretch occupies residues 662–700; the sequence is RRLRERGAAGGSSTPTPQHGEEKKAWTPSRLERIESTEI. Positions 680 to 700 are enriched in basic and acidic residues; the sequence is HGEEKKAWTPSRLERIESTEI.

Belongs to the LZTS3 family. Interacts (via C-terminus) with SHANK3 (via PDZ domain). Interacts (via coiled coil) with SIPA1L1. Can form homooligomers.

It is found in the synapse. The protein resides in the postsynaptic density. Its subcellular location is the cell projection. It localises to the dendritic spine. The protein localises to the dendrite. It is found in the cytoplasm. The protein resides in the cytoskeleton. Functionally, may be involved in promoting the maturation of dendritic spines, probably via regulating SIPA1L1 levels at the postsynaptic density of synapses. The chain is Leucine zipper putative tumor suppressor 3 from Mus musculus (Mouse).